A 316-amino-acid polypeptide reads, in one-letter code: RNA interference defective protein 11 (316 aa).

An RING-type; degenerate zinc finger spans residues 183–218 (CYINFNCQTSKVMFGCGHVYCEQCLNSWNDKPCSVC).

Interacts (via RING-type zinc finger domain) with rde-10.

In terms of biological role, in complex with rde-10, required in the endogenous and exogenous siRNA pathway for biogenesis and accumulation of secondary small interfering RNA (siRNA) intermediates, such as 22G-siRNAs derived from ergo-1 targets. This chain is RNA interference defective protein 11, found in Caenorhabditis elegans.